Consider the following 449-residue polypeptide: Ribulose bisphosphate carboxylase large chain (449 aa).

Lysine 7 bears the N6,N6,N6-trimethyllysine mark. Positions 116 and 166 each coordinate substrate. Lysine 168 (proton acceptor) is an active-site residue. Lysine 170 contributes to the substrate binding site. The Mg(2+) site is built by lysine 194, aspartate 196, and glutamate 197. N6-carboxylysine is present on lysine 194. Histidine 287 functions as the Proton acceptor in the catalytic mechanism. Arginine 288, histidine 320, and serine 372 together coordinate substrate.

It belongs to the RuBisCO large chain family. Type I subfamily. Heterohexadecamer of 8 large chains and 8 small chains; disulfide-linked. The disulfide link is formed within the large subunit homodimers. Mg(2+) serves as cofactor. The disulfide bond which can form in the large chain dimeric partners within the hexadecamer appears to be associated with oxidative stress and protein turnover.

It localises to the plastid. It is found in the chloroplast. The catalysed reaction is 2 (2R)-3-phosphoglycerate + 2 H(+) = D-ribulose 1,5-bisphosphate + CO2 + H2O. The enzyme catalyses D-ribulose 1,5-bisphosphate + O2 = 2-phosphoglycolate + (2R)-3-phosphoglycerate + 2 H(+). Its function is as follows. RuBisCO catalyzes two reactions: the carboxylation of D-ribulose 1,5-bisphosphate, the primary event in carbon dioxide fixation, as well as the oxidative fragmentation of the pentose substrate in the photorespiration process. Both reactions occur simultaneously and in competition at the same active site. This Aspidistra elatior (Cast-iron plant) protein is Ribulose bisphosphate carboxylase large chain.